We begin with the raw amino-acid sequence, 324 residues long: MQKTIWAEVPWLHPGFAQTCIDFYQLTKPRLILLFLITTAAAMWVASSGQVGPRLFLTTLLAGACAAGSANTINCIYDRDIDYIMERTRHRPLPSGRIQVWQASVFAASLALTAFFLLAFGANLLSACLAMAGIAVYIGVYTYWLKRSSTQNIVIGGAAGAIPPLVGWAAVTGELSWAAWVLFAIIFIWTPPHFWPLAMMIEEDYSKVGVPMMPVVNGMATTANQTFIYTLLLLPVTLLLVYPLKVSGALYASIAIVLWVQFIHKAWQLTQTPDDKQMARSVFKFSILYMMLLCAGMGVDSLPWTQQIWHHSTHILQAWIPSIG.

A run of 9 helical transmembrane segments spans residues L31 to V51, F56 to I76, V105 to L125, S126 to K146, I153 to G173, V181 to I201, P214 to L234, L238 to L258, and F285 to T305.

The protein belongs to the UbiA prenyltransferase family. Protoheme IX farnesyltransferase subfamily.

Its subcellular location is the cell inner membrane. It carries out the reaction heme b + (2E,6E)-farnesyl diphosphate + H2O = Fe(II)-heme o + diphosphate. It functions in the pathway porphyrin-containing compound metabolism; heme O biosynthesis; heme O from protoheme: step 1/1. Converts heme B (protoheme IX) to heme O by substitution of the vinyl group on carbon 2 of heme B porphyrin ring with a hydroxyethyl farnesyl side group. This is Protoheme IX farnesyltransferase from Acaryochloris marina (strain MBIC 11017).